The sequence spans 498 residues: MAKTNSKNLLGQKIIKLLRNRDFVISVFVTLFLILLFRVISVIPLPGITISQNKNNLNNGVSDFFDLFNLLGGGGLSQLSLFAVGISPYISAQIIMQLLSTDLIPPLSKLAKSGELGRRRIELITRFVTLPFAVVQAFAIIALINNQRNGAIRFENGGILHQAFYIVTMTAGTYIGIFIGDIISKKGVGNGITLLILSGILARLPDGFIVMYRVLGGVIISTNPILTSAINFSLYFLAFLVLLLAISFVNSSTRRIPIQQTGEGMVLGNEKLPYLPIKLNAAGVIPVIFASSIMSIPITIAEFQPQSEARWFVEDYLSLRTPVGISLYVILIIIFTFFYSYIQINPEQLAENFNKSHKFIPGVRPGLDTEKHITKVLMRINFIGAPFLAIVAVIPYIISLVLNVPTTLSLGGTGIIIMVSASMELYRSLRSAATTTSYQRLRKDIANRIEAELSLNDYMNKPNLEHDQYGLLGQHKKVEPTQDKKKNPSDPLEVSQLW.

A run of 10 helical transmembrane segments spans residues 23–43, 65–87, 124–144, 163–183, 191–211, 229–249, 281–301, 322–342, 382–402, and 406–426; these read FVIS…ISVI, FDLF…VGIS, ITRF…IALI, AFYI…GDII, GITL…FIVM, AINF…ISFV, AAGV…ITIA, PVGI…YSYI, FIGA…SLVL, and TTLS…MELY. Over residues 478 to 488 the composition is skewed to basic and acidic residues; sequence VEPTQDKKKNP. The disordered stretch occupies residues 478 to 498; that stretch reads VEPTQDKKKNPSDPLEVSQLW.

It belongs to the SecY/SEC61-alpha family. Component of the Sec protein translocase complex. Heterotrimer consisting of SecY, SecE and SecG subunits. The heterotrimers can form oligomers, although 1 heterotrimer is thought to be able to translocate proteins. Interacts with the ribosome. Interacts with SecDF, and other proteins may be involved. Interacts with SecA.

It is found in the cell membrane. The central subunit of the protein translocation channel SecYEG. Consists of two halves formed by TMs 1-5 and 6-10. These two domains form a lateral gate at the front which open onto the bilayer between TMs 2 and 7, and are clamped together by SecE at the back. The channel is closed by both a pore ring composed of hydrophobic SecY resides and a short helix (helix 2A) on the extracellular side of the membrane which forms a plug. The plug probably moves laterally to allow the channel to open. The ring and the pore may move independently. The chain is Protein translocase subunit SecY from Mycoplasmoides gallisepticum (strain R(low / passage 15 / clone 2)) (Mycoplasma gallisepticum).